Reading from the N-terminus, the 149-residue chain is Prefoldin subunit alpha (149 aa).

This sequence belongs to the prefoldin subunit alpha family. In terms of assembly, heterohexamer of two alpha and four beta subunits.

The protein localises to the cytoplasm. Functionally, molecular chaperone capable of stabilizing a range of proteins. Seems to fulfill an ATP-independent, HSP70-like function in archaeal de novo protein folding. This Methanospirillum hungatei JF-1 (strain ATCC 27890 / DSM 864 / NBRC 100397 / JF-1) protein is Prefoldin subunit alpha.